A 145-amino-acid chain; its full sequence is Large ribosomal subunit protein uL15 (145 aa).

The segment at Gly20–Gln54 is disordered. A compositionally biased stretch (gly residues) spans Ser42–Gly52.

It belongs to the universal ribosomal protein uL15 family. Part of the 50S ribosomal subunit.

Binds to the 23S rRNA. This Mycoplasma mycoides subsp. mycoides SC (strain CCUG 32753 / NCTC 10114 / PG1) protein is Large ribosomal subunit protein uL15.